Consider the following 1178-residue polypeptide: F-box/WD repeat-containing protein A-like protein (1178 aa).

In terms of domain architecture, START spans 1-208 (MQYVNGMDIV…TLPNLIKYIK (208 aa)). 3 disordered regions span residues 223–296 (KTPD…NLNE), 569–594 (SLIINSPPNSNNHENEKKRKFRDNGI), and 618–649 (SSSSSSTSSSLTFSPPQQLSSPTSSSSSSTFS). 2 stretches are compositionally biased toward low complexity: residues 229 to 293 (NPNL…SNEN) and 571 to 580 (IINSPPNSNN). Residues 717 to 763 (CSLFDLLPYEMIQYIFTLMDATHLIRMSRTCKYFNRICLDDNIWRDL) enclose the F-box domain. The disordered stretch occupies residues 804-841 (KKSNNSSPLSASSSSSSPSPPLLPPPPPPIPQLPDMLL). Residues 809 to 820 (SSPLSASSSSSS) show a composition bias toward low complexity. The span at 821–835 (PSPPLLPPPPPPIPQ) shows a compositional bias: pro residues. WD repeat units lie at residues 886 to 923 (GHKGKISCLQMAPNQIFTGSKDKEFKSWNIATKQCEST), 925 to 979 (RCGA…IEKE), 981 to 1017 (RFLYVSNGFIFMKRDIYSYESNTVKLYDSETEQELQM), 1020 to 1059 (IENTKINHCKIGRFENFCMIACTDKTVKLWDIDSNKTELV), 1062 to 1100 (GHKGSVNCLDFLNDYQLITGSSDKTIRMWDIRNPSSAIH), 1104 to 1141 (SHSSKVKAISIYNNLRMCTGDEDSICLWNLEGSNEPNL), and 1146 to 1178 (NNLSPVECLSIDDETMLAGFSDGEVSYYDFNSK).

Functionally, substrate recognition component of a SCF (SKP1-CUL1-F-box protein) E3 ubiquitin-protein ligase complex which mediates the ubiquitination and subsequent proteasomal degradation of target proteins. This Dictyostelium discoideum (Social amoeba) protein is F-box/WD repeat-containing protein A-like protein.